Here is a 118-residue protein sequence, read N- to C-terminus: Myotrophin (118 aa).

ANK repeat units lie at residues 1-30 (MGDK…DVNR), 34-65 (GGRK…NAPD), and 67-98 (HGIT…NRKG).

This sequence belongs to the myotrophin family.

Its subcellular location is the cytoplasm. It is found in the nucleus. It localises to the perinuclear region. Functionally, regulates NF-kappa-B transcription factor activity. Promotes growth of cardiomyocytes, but not cardiomyocyte proliferation. Promotes cardiac muscle hypertrophy. Plays a role in the regulation of the growth of actin filaments. Inhibits the activity of the F-actin-capping protein complex. This chain is Myotrophin (mtpn), found in Danio rerio (Zebrafish).